Reading from the N-terminus, the 485-residue chain is Aspartyl/glutamyl-tRNA(Asn/Gln) amidotransferase subunit B (485 aa).

It belongs to the GatB/GatE family. GatB subfamily. Heterotrimer of A, B and C subunits.

The catalysed reaction is L-glutamyl-tRNA(Gln) + L-glutamine + ATP + H2O = L-glutaminyl-tRNA(Gln) + L-glutamate + ADP + phosphate + H(+). It catalyses the reaction L-aspartyl-tRNA(Asn) + L-glutamine + ATP + H2O = L-asparaginyl-tRNA(Asn) + L-glutamate + ADP + phosphate + 2 H(+). Functionally, allows the formation of correctly charged Asn-tRNA(Asn) or Gln-tRNA(Gln) through the transamidation of misacylated Asp-tRNA(Asn) or Glu-tRNA(Gln) in organisms which lack either or both of asparaginyl-tRNA or glutaminyl-tRNA synthetases. The reaction takes place in the presence of glutamine and ATP through an activated phospho-Asp-tRNA(Asn) or phospho-Glu-tRNA(Gln). The polypeptide is Aspartyl/glutamyl-tRNA(Asn/Gln) amidotransferase subunit B (Rhodospirillum rubrum (strain ATCC 11170 / ATH 1.1.1 / DSM 467 / LMG 4362 / NCIMB 8255 / S1)).